Reading from the N-terminus, the 194-residue chain is Interleukin-18 (194 aa).

Positions 1–36 (MAAMSEEGSCVNFKEMMFIDNTLYLIPEDNGDLESD) are excised as a propeptide.

The protein belongs to the IL-1 family. Forms a ternary complex with ligand-binding receptor subunit IL18R1 and signaling receptor subunit IL18RAP at the plasma membrane. Mature IL18 first binds to IL18R1 forming a low affinity binary complex, which then interacts with IL18RAP to form a high affinity ternary complex that signals inside the cell. Interacts with cargo receptor TMED10; the interaction mediates the translocation from the cytoplasm into the ERGIC (endoplasmic reticulum-Golgi intermediate compartment) and thereby secretion. Post-translationally, the pro-IL-18 precursor is processed by CASP1 to yield its mature, active form. The pro-IL-18 precursor is however not processed by Casp4/Casp11 in rodents. The pro-IL-18 precursor features autoinhibitory interactions between the propeptide and the post-cleavage-site region, preventing recognition by the IL18R1 receptor. Processing by CASP1 induces conformational changes to generate critical receptor-binding sites. The mature form is then secreted and released in the extracellular milieu by passing through the gasdermin-D (GSDMD) pore. In contrast, cleavage by CASP3 inactivates IL18.

It is found in the cytoplasm. It localises to the cytosol. Its subcellular location is the secreted. Functionally, pro-inflammatory cytokine primarily involved in epithelial barrier repair, polarized T-helper 1 (Th1) cell and natural killer (NK) cell immune responses. Upon binding to IL18R1 and IL18RAP, forms a signaling ternary complex which activates NF-kappa-B, triggering synthesis of inflammatory mediators. Synergizes with IL12/interleukin-12 to induce IFNG synthesis from T-helper 1 (Th1) cells and natural killer (NK) cells. Involved in transduction of inflammation downstream of pyroptosis: its mature form is specifically released in the extracellular milieu by passing through the gasdermin-D (GSDMD) pore. The protein is Interleukin-18 (Il18) of Rattus norvegicus (Rat).